A 93-amino-acid polypeptide reads, in one-letter code: Phosphoribosyl-ATP pyrophosphatase (93 aa).

The protein belongs to the PRA-PH family.

The protein localises to the cytoplasm. It carries out the reaction 1-(5-phospho-beta-D-ribosyl)-ATP + H2O = 1-(5-phospho-beta-D-ribosyl)-5'-AMP + diphosphate + H(+). It functions in the pathway amino-acid biosynthesis; L-histidine biosynthesis; L-histidine from 5-phospho-alpha-D-ribose 1-diphosphate: step 2/9. The sequence is that of Phosphoribosyl-ATP pyrophosphatase from Mycobacterium sp. (strain JLS).